The sequence spans 113 residues: Sensorin-A (113 aa).

The signal sequence occupies residues 1 to 32; that stretch reads MPSRAATSPLNVQMMVVLCIVCLALQAVAANA. The residue at position 54 (Phe54) is a Phenylalanine amide. Positions 58-113 are excised as a propeptide; that stretch reads SSSETYSTNLINLLSRQLVSQEELRAILEKQPILLDEVVKILDRNDDGYITVADLL. In terms of domain architecture, EF-hand spans 87–113; sequence KQPILLDEVVKILDRNDDGYITVADLL. Ca(2+) is bound by residues Asp100, Asn102, Asp104, Tyr106, and Asp111.

In terms of tissue distribution, seems to be specific to the mechanosensory neurons of the central nervous system.

Its subcellular location is the secreted. Functionally, may function as an inhibitory cotransmitter acting in conjunction with the fast excitatory transmitter released by sensory neurons. The peptide selectively inhibits certain postsynaptic cells probably by means of sensorin A release. This Aplysia californica (California sea hare) protein is Sensorin-A (PSC1).